Reading from the N-terminus, the 1396-residue chain is MRPLLDEAKRRVDRRLSASRQSLSTSRIFPSALPERLKDDHDAQVDYTAPPGGGGTKEGHFQYMQQSIFGMIAAVGSQSDFHARFDDSSDSERDTDRPPQKRTEKESQATDAPPSSKNEKKALRSPQRPKSPSQERGRRHRKTLSGSRILRPLMPGSSQRQGGAQTEPSTGNQMSRVPSPERPRSTTPRAAPVLSRMVEAQALFDSKGSMNQSPRSPPAETQEEQSQEQTSASPLSLRLMEMFGFESPEKVLVEYACSLVQSMLLQGYMYVTEGHICFYAYLPRKSTVAIKSGYLYKRGRKNPKYNRYWFSLKGDVLSYYADPSNLYFPSGHIDLRYGISASLSEPKEKDREARDFQVTTDQRTYYFRADSSTSAKEWVKSLQKVIFRTHNDGDSVKISFPIESIIDIEESPMVDFAETFKIRAIESGETYAIDEYYFSFFNDGQDAFNFVKGLVSESQAKNPSRESPQPGRTTPQSRARGSRARWSLTSGLSQVLGSSDARRRRSASASQFSPGRDAAGLSPTSRQRDLSESFVNSFDQATESSTVLQSMTDTAESASQILNRSDVFQYPAMQPFRRQSLSEDQFGRRHSDETARSTNDIARLGPGITPRDVQRFYPPSDSDHDAQDAARVQQSASSLNELVRAGAYPLQRAAGLAEYLRNRSKQMGTLLASESMGYIEKVSGMWAGGRRHYGEAEGILPDDQDVDPEDKEDGCNHGDRFRAHFALPPTEKLQATYFAYLHRVLPLYGKIYVSQKKLCFRSLLPGTRTKMILPLKDVENVEKEKGFRFGYHGLVVIIRGHEELFFEFNAADVRDDCAVTIHQHLESVRFLSESGMLAEQEQDESEAAKAEHRMLQEARKDASGGLIPQTPSDESPEIHPIFDDPRASIINFKPTESLRITCLTIGSRGDVQPYIALCKGLLAEGHRPKIATHAEFEPWIRKHGIDFAPVEGDPAELMRICVENGMFTYSFLKEASMKFRGWIDDLLSSAWRSCQDSDLLIESPSAMAGIHIAEALRIPYFRAFTMPWTRTRAYPHAFAVPEHKMGGAYNYITYVMFDNVFWKAIAGQVNRWRQSELGLKATNLDKMQPNKVPFLYNYSPSVVVPPLDYPDWIRITGYWFLSEASDWTPPADLMAFIQRARDDGKKLVYIGFGSIVVSDPSALTRTVVESVQKADVRCILSKGWSDRLGDPASVKSEIPLPPEIFQIQAAPHDWLFSQIDAAAHHGGAGTTGASLRAGVPTIVKPFFGDQFFFGTRVEDLGVGICLKRLNVSLFSRALWEATHSERMIVKARNLGQQIRSEDGVATAIQAIYRDLEYAKTLARQRSIVSSTPFSPTPSAKTVAEQEVDDDVTDSEEWTFIGDETDIDISRRVRGRAVSDVDMLPEPLAVRSPELAQ.

Residues 1–16 show a composition bias toward basic and acidic residues; that stretch reads MRPLLDEAKRRVDRRL. Disordered stretches follow at residues 1–59, 82–193, and 206–233; these read MRPL…TKEG, HARF…AAPV, and SKGS…TSAS. Residues 18 to 28 are compositionally biased toward polar residues; sequence ASRQSLSTSRI. 2 stretches are compositionally biased toward basic and acidic residues: residues 35–44 and 82–108; these read ERLKDDHDAQ and HARF…KESQ. Over residues 156 to 175 the composition is skewed to polar residues; it reads GSSQRQGGAQTEPSTGNQMS. In terms of domain architecture, GRAM 1 spans 237-288; the sequence is LRLMEMFGFESPEKVLVEYACSLVQSMLLQGYMYVTEGHICFYAYLPRKSTV. The region spanning 289 to 387 is the PH domain; sequence AIKSGYLYKR…WVKSLQKVIF (99 aa). 2 stretches are compositionally biased toward polar residues: residues 459-479 and 487-497; these read QAKN…QSRA and SLTSGLSQVLG. Disordered stretches follow at residues 459-531 and 576-635; these read QAKN…RDLS and FRRQ…VQQS. Over residues 585–595 the composition is skewed to basic and acidic residues; it reads QFGRRHSDETA. Residues 719–785 enclose the GRAM 2 domain; the sequence is DRFRAHFALP…KDVENVEKEK (67 aa). The interval 841–880 is disordered; sequence EQDESEAAKAEHRMLQEARKDASGGLIPQTPSDESPEIHP. A compositionally biased stretch (basic and acidic residues) spans 846–862; that stretch reads EAAKAEHRMLQEARKDA. 10 residues coordinate UDP-alpha-D-glucose: Ser-907, Arg-908, Asp-910, Ala-1210, His-1212, His-1225, Gly-1229, Thr-1230, Asp-1249, and Gln-1250.

The protein belongs to the glycosyltransferase 28 family.

It localises to the cytoplasm. The protein localises to the preautophagosomal structure membrane. The catalysed reaction is a sterol + UDP-alpha-D-glucose = a sterol 3-beta-D-glucoside + UDP + H(+). It catalyses the reaction ergosterol + UDP-alpha-D-glucose = ergosteryl 3-beta-D-glucoside + UDP + H(+). Its function is as follows. Sterol glycosyltransferase responsible for the glycosylation of ergosterol to form ergosterol-glucoside. This is Sterol 3-beta-glucosyltransferase from Aspergillus terreus (strain NIH 2624 / FGSC A1156).